We begin with the raw amino-acid sequence, 337 residues long: uncharacterized protein (337 aa).

The F-box domain occupies 12 to 60 (SLNYVDLPDTVHRKIFEYLNPWEIFKLSRISKAIHVTILKNKKFAVKDI).

This is an uncharacterized protein from Caenorhabditis elegans.